A 535-amino-acid polypeptide reads, in one-letter code: Bifunctional purine biosynthesis protein PurH (535 aa).

The MGS-like domain maps to 6-151 (TRLPVRRALI…KNHKDVAIVV (146 aa)).

This sequence belongs to the PurH family.

The enzyme catalyses (6R)-10-formyltetrahydrofolate + 5-amino-1-(5-phospho-beta-D-ribosyl)imidazole-4-carboxamide = 5-formamido-1-(5-phospho-D-ribosyl)imidazole-4-carboxamide + (6S)-5,6,7,8-tetrahydrofolate. It catalyses the reaction IMP + H2O = 5-formamido-1-(5-phospho-D-ribosyl)imidazole-4-carboxamide. It participates in purine metabolism; IMP biosynthesis via de novo pathway; 5-formamido-1-(5-phospho-D-ribosyl)imidazole-4-carboxamide from 5-amino-1-(5-phospho-D-ribosyl)imidazole-4-carboxamide (10-formyl THF route): step 1/1. It functions in the pathway purine metabolism; IMP biosynthesis via de novo pathway; IMP from 5-formamido-1-(5-phospho-D-ribosyl)imidazole-4-carboxamide: step 1/1. The sequence is that of Bifunctional purine biosynthesis protein PurH from Pseudomonas putida (strain ATCC 700007 / DSM 6899 / JCM 31910 / BCRC 17059 / LMG 24140 / F1).